The sequence spans 387 residues: 1-deoxy-D-xylulose 5-phosphate reductoisomerase (387 aa).

NADPH-binding residues include T10, G11, S12, I13, and N124. Residue K125 participates in 1-deoxy-D-xylulose 5-phosphate binding. E126 lines the NADPH pocket. A Mn(2+)-binding site is contributed by D150. 1-deoxy-D-xylulose 5-phosphate contacts are provided by S151, E152, S176, and H199. Residue E152 coordinates Mn(2+). Position 205 (G205) interacts with NADPH. 1-deoxy-D-xylulose 5-phosphate contacts are provided by S212, N217, K218, and E221. Residue E221 coordinates Mn(2+).

Belongs to the DXR family. Mg(2+) serves as cofactor. The cofactor is Mn(2+).

The catalysed reaction is 2-C-methyl-D-erythritol 4-phosphate + NADP(+) = 1-deoxy-D-xylulose 5-phosphate + NADPH + H(+). It participates in isoprenoid biosynthesis; isopentenyl diphosphate biosynthesis via DXP pathway; isopentenyl diphosphate from 1-deoxy-D-xylulose 5-phosphate: step 1/6. Its function is as follows. Catalyzes the NADPH-dependent rearrangement and reduction of 1-deoxy-D-xylulose-5-phosphate (DXP) to 2-C-methyl-D-erythritol 4-phosphate (MEP). The polypeptide is 1-deoxy-D-xylulose 5-phosphate reductoisomerase (Clostridium beijerinckii (strain ATCC 51743 / NCIMB 8052) (Clostridium acetobutylicum)).